The following is a 235-amino-acid chain: Regulator of G-protein signaling 18 (235 aa).

Serine 49 carries the post-translational modification Phosphoserine. Residues 86–202 (SFDKLLSHRD…LKSDIYLDLM (117 aa)) form the RGS domain. Phosphoserine is present on residues serine 216 and serine 218.

As to expression, expressed in peripheral leukocytes, bone marrow, platelet, spleen and fetal liver.

It localises to the cytoplasm. Inhibits signal transduction by increasing the GTPase activity of G protein alpha subunits thereby driving them into their inactive GDP-bound form. Binds to G(i) alpha-1, G(i) alpha-2, G(i) alpha-3 and G(q) alpha. The chain is Regulator of G-protein signaling 18 (RGS18) from Homo sapiens (Human).